We begin with the raw amino-acid sequence, 158 residues long: SsrA-binding protein (158 aa).

It belongs to the SmpB family.

It localises to the cytoplasm. In terms of biological role, required for rescue of stalled ribosomes mediated by trans-translation. Binds to transfer-messenger RNA (tmRNA), required for stable association of tmRNA with ribosomes. tmRNA and SmpB together mimic tRNA shape, replacing the anticodon stem-loop with SmpB. tmRNA is encoded by the ssrA gene; the 2 termini fold to resemble tRNA(Ala) and it encodes a 'tag peptide', a short internal open reading frame. During trans-translation Ala-aminoacylated tmRNA acts like a tRNA, entering the A-site of stalled ribosomes, displacing the stalled mRNA. The ribosome then switches to translate the ORF on the tmRNA; the nascent peptide is terminated with the 'tag peptide' encoded by the tmRNA and targeted for degradation. The ribosome is freed to recommence translation, which seems to be the essential function of trans-translation. This chain is SsrA-binding protein, found in Bartonella quintana (strain Toulouse) (Rochalimaea quintana).